We begin with the raw amino-acid sequence, 214 residues long: Single-pass membrane and coiled-coil domain-containing protein 1 (214 aa).

A coiled-coil region spans residues 5-40 (TTTLISLKEAMKRVDNKLRALDTQFKELDVTKDNLT). Residues 59–81 (IWTAALALGFTSMELNIVYSYVI) form a helical membrane-spanning segment. The tract at residues 193–214 (KQAQDPENSRAPLKELMPPVKD) is disordered.

The protein localises to the membrane. This chain is Single-pass membrane and coiled-coil domain-containing protein 1 (Smco1), found in Mus musculus (Mouse).